The chain runs to 64 residues: MPKAKTHSGASKRFRTTGSGKIVRQKANRRHLLEHKPTSRTRRLDGRAVVAENDAKRVKKMLTG.

Composition is skewed to basic residues over residues 1–15 (MPKAKTHSGASKRFR) and 23–33 (VRQKANRRHLL). Residues 1–47 (MPKAKTHSGASKRFRTTGSGKIVRQKANRRHLLEHKPTSRTRRLDGR) form a disordered region. The span at 34–46 (EHKPTSRTRRLDG) shows a compositional bias: basic and acidic residues.

The protein belongs to the bacterial ribosomal protein bL35 family.

The polypeptide is Large ribosomal subunit protein bL35 (Mycobacteroides abscessus (strain ATCC 19977 / DSM 44196 / CCUG 20993 / CIP 104536 / JCM 13569 / NCTC 13031 / TMC 1543 / L948) (Mycobacterium abscessus)).